Here is a 164-residue protein sequence, read N- to C-terminus: Protein SprT (164 aa).

A SprT-like domain is found at 14 to 156 (QQAETFFKRP…LCKRCRETLV (143 aa)). Residue His-69 coordinates Zn(2+). Glu-70 is a catalytic residue. His-73 contributes to the Zn(2+) binding site.

This sequence belongs to the SprT family. Zn(2+) serves as cofactor.

It localises to the cytoplasm. In Pseudomonas putida (strain W619), this protein is Protein SprT.